The chain runs to 360 residues: Peptide chain release factor 1 (360 aa).

Gln-237 carries the N5-methylglutamine modification.

This sequence belongs to the prokaryotic/mitochondrial release factor family. Methylated by PrmC. Methylation increases the termination efficiency of RF1.

It localises to the cytoplasm. Functionally, peptide chain release factor 1 directs the termination of translation in response to the peptide chain termination codons UAG and UAA. The sequence is that of Peptide chain release factor 1 (prfA) from Pseudomonas aeruginosa (strain ATCC 15692 / DSM 22644 / CIP 104116 / JCM 14847 / LMG 12228 / 1C / PRS 101 / PAO1).